Reading from the N-terminus, the 306-residue chain is Protein farnesyltransferase/geranylgeranyltransferase type-1 subunit alpha (306 aa).

5 PFTA repeats span residues Tyr-48–Asn-82, Asn-84–Glu-118, Asp-125–Leu-159, Asn-161–His-195, and Thr-201–Arg-235.

The protein belongs to the protein prenyltransferase subunit alpha family. In terms of assembly, heterodimer of an alpha and a beta subunit. It depends on Mg(2+) as a cofactor.

It catalyses the reaction L-cysteinyl-[protein] + (2E,6E)-farnesyl diphosphate = S-(2E,6E)-farnesyl-L-cysteinyl-[protein] + diphosphate. The catalysed reaction is geranylgeranyl diphosphate + L-cysteinyl-[protein] = S-geranylgeranyl-L-cysteinyl-[protein] + diphosphate. Essential subunit of both the farnesyltransferase and the geranylgeranyltransferase complex. Contributes to the transfer of a farnesyl or geranylgeranyl moiety from farnesyl or geranylgeranyl diphosphate to a cysteine at the fourth position from the C-terminus of several proteins having the C-terminal sequence Cys-aliphatic-aliphatic-X. In Candida albicans (Yeast), this protein is Protein farnesyltransferase/geranylgeranyltransferase type-1 subunit alpha (RAM2).